The chain runs to 512 residues: Glutathione-binding protein GsiB (512 aa).

The N-terminal stretch at 1–26 (MTQFITHKWLAALGLASSIAAFPALA) is a signal peptide.

Belongs to the bacterial solute-binding protein 5 family. The complex is composed of two ATP-binding proteins (GsiA), two transmembrane proteins (GsiC and GsiD) and a solute-binding protein (GsiB).

The protein localises to the periplasm. Functionally, part of the ABC transporter complex GsiABCD involved in glutathione import. Binds glutathione. The sequence is that of Glutathione-binding protein GsiB from Salmonella typhi.